The following is a 41-amino-acid chain: Bacteriocin (41 aa).

A disulfide bond links Cys-9 and Cys-14.

The protein resides in the secreted. Functionally, bacteriocin active against S.aureus, S.typhi, B.thuringiensis, Klebsiella sp., E.coli KL16 and E.coli Gj137. In Lactococcus sp, this protein is Bacteriocin.